The following is a 265-amino-acid chain: tRNA pseudouridine synthase A (265 aa).

Asp58 acts as the Nucleophile in catalysis. A substrate-binding site is contributed by Tyr116.

This sequence belongs to the tRNA pseudouridine synthase TruA family. As to quaternary structure, homodimer.

The catalysed reaction is uridine(38/39/40) in tRNA = pseudouridine(38/39/40) in tRNA. Formation of pseudouridine at positions 38, 39 and 40 in the anticodon stem and loop of transfer RNAs. In Neisseria meningitidis serogroup C / serotype 2a (strain ATCC 700532 / DSM 15464 / FAM18), this protein is tRNA pseudouridine synthase A.